The sequence spans 433 residues: Eukaryotic translation initiation factor 3 subunit E (433 aa).

In terms of domain architecture, PCI spans 217-390 (FFNHGKGRDL…GHVVMGTQPL (174 aa)).

The protein belongs to the eIF-3 subunit E family. Component of the eukaryotic translation initiation factor 3 (eIF-3) complex.

It is found in the cytoplasm. Its function is as follows. Component of the eukaryotic translation initiation factor 3 (eIF-3) complex, which is involved in protein synthesis of a specialized repertoire of mRNAs and, together with other initiation factors, stimulates binding of mRNA and methionyl-tRNAi to the 40S ribosome. The eIF-3 complex specifically targets and initiates translation of a subset of mRNAs involved in cell proliferation. This Anopheles gambiae (African malaria mosquito) protein is Eukaryotic translation initiation factor 3 subunit E (eIF3-S6).